A 920-amino-acid polypeptide reads, in one-letter code: Isoleucine--tRNA ligase (920 aa).

The short motif at 58 to 68 (PYANGHLHLGH) is the 'HIGH' region element. Glutamate 569 is a binding site for L-isoleucyl-5'-AMP. The short motif at 610–614 (KMSKS) is the 'KMSKS' region element. Lysine 613 is a binding site for ATP. Residues cysteine 895, cysteine 898, cysteine 910, and cysteine 913 each contribute to the Zn(2+) site.

It belongs to the class-I aminoacyl-tRNA synthetase family. IleS type 1 subfamily. Monomer. Zn(2+) serves as cofactor.

The protein resides in the cytoplasm. The enzyme catalyses tRNA(Ile) + L-isoleucine + ATP = L-isoleucyl-tRNA(Ile) + AMP + diphosphate. Its function is as follows. Catalyzes the attachment of isoleucine to tRNA(Ile). As IleRS can inadvertently accommodate and process structurally similar amino acids such as valine, to avoid such errors it has two additional distinct tRNA(Ile)-dependent editing activities. One activity is designated as 'pretransfer' editing and involves the hydrolysis of activated Val-AMP. The other activity is designated 'posttransfer' editing and involves deacylation of mischarged Val-tRNA(Ile). This is Isoleucine--tRNA ligase from Helicobacter pylori (strain HPAG1).